A 369-amino-acid polypeptide reads, in one-letter code: Omega-amidase, chloroplastic (369 aa).

The N-terminal 63 residues, 1 to 63 (MKSAISSSLF…SALRSISSSM (63 aa)), are a transit peptide targeting the chloroplast. Residue Ala64 is modified to N-acetylalanine. Positions 88–337 (FNIGLCQLSV…EAIIIAEIDY (250 aa)) constitute a CN hydrolase domain. Glu127 (proton acceptor) is an active-site residue. The Proton donor role is filled by Lys201. Cys242 acts as the Nucleophile in catalysis.

The protein belongs to the nitrilase superfamily. NIT1/NIT2 family.

The protein resides in the plastid. Its subcellular location is the chloroplast. The catalysed reaction is a monoamide of a dicarboxylate + H2O = a dicarboxylate + NH4(+). Its function is as follows. Omega-amidase involved in the metabolism of asparagine. Probably also closely coupled with glutamine transamination in the methionine salvage cycle. Can use alpha-ketosuccinamate and alpha-hydroxysuccinamate as substrates, producing respectively oxaloacetate and malate, or alpha-ketoglutaramate, producing alpha-ketoglutarate. This is Omega-amidase, chloroplastic from Arabidopsis thaliana (Mouse-ear cress).